We begin with the raw amino-acid sequence, 116 residues long: Iron-sulfur cluster insertion protein ErpA (116 aa).

Residues C44, C108, and C110 each coordinate iron-sulfur cluster.

Belongs to the HesB/IscA family. As to quaternary structure, homodimer. It depends on iron-sulfur cluster as a cofactor.

Functionally, required for insertion of 4Fe-4S clusters for at least IspG. This is Iron-sulfur cluster insertion protein ErpA from Shewanella halifaxensis (strain HAW-EB4).